We begin with the raw amino-acid sequence, 188 residues long: Protein-L-isoaspartate O-methyltransferase (188 aa).

Residue Ser33 is part of the active site.

This sequence belongs to the methyltransferase superfamily. L-isoaspartyl/D-aspartyl protein methyltransferase family.

The protein resides in the cytoplasm. The catalysed reaction is [protein]-L-isoaspartate + S-adenosyl-L-methionine = [protein]-L-isoaspartate alpha-methyl ester + S-adenosyl-L-homocysteine. Catalyzes the methyl esterification of L-isoaspartyl residues in peptides and proteins that result from spontaneous decomposition of normal L-aspartyl and L-asparaginyl residues. It plays a role in the repair and/or degradation of damaged proteins. The protein is Protein-L-isoaspartate O-methyltransferase of Methanocella arvoryzae (strain DSM 22066 / NBRC 105507 / MRE50).